The sequence spans 210 residues: Thymidylate kinase (210 aa).

An ATP-binding site is contributed by 11–18; it reads GLEGAGKS.

It belongs to the thymidylate kinase family.

The catalysed reaction is dTMP + ATP = dTDP + ADP. Functionally, phosphorylation of dTMP to form dTDP in both de novo and salvage pathways of dTTP synthesis. The chain is Thymidylate kinase from Vibrio campbellii (strain ATCC BAA-1116).